Here is a 599-residue protein sequence, read N- to C-terminus: Elongation factor 4 (599 aa).

The region spanning 2–184 (KNIRNFSIIA…RLVRDIPPPQ (183 aa)) is the tr-type G domain. GTP-binding positions include 14–19 (DHGKST) and 131–134 (NKID).

The protein belongs to the TRAFAC class translation factor GTPase superfamily. Classic translation factor GTPase family. LepA subfamily.

The protein resides in the cell inner membrane. It catalyses the reaction GTP + H2O = GDP + phosphate + H(+). Required for accurate and efficient protein synthesis under certain stress conditions. May act as a fidelity factor of the translation reaction, by catalyzing a one-codon backward translocation of tRNAs on improperly translocated ribosomes. Back-translocation proceeds from a post-translocation (POST) complex to a pre-translocation (PRE) complex, thus giving elongation factor G a second chance to translocate the tRNAs correctly. Binds to ribosomes in a GTP-dependent manner. This chain is Elongation factor 4, found in Salmonella paratyphi A (strain ATCC 9150 / SARB42).